We begin with the raw amino-acid sequence, 81 residues long: Photosystem I iron-sulfur center (81 aa).

4Fe-4S ferredoxin-type domains follow at residues 2–31 (SHSV…MIPW) and 39–68 (IASA…VRVY). Residues Cys11, Cys14, Cys17, Cys21, Cys48, Cys51, Cys54, and Cys58 each coordinate [4Fe-4S] cluster.

The eukaryotic PSI reaction center is composed of at least 11 subunits. Requires [4Fe-4S] cluster as cofactor.

The protein localises to the plastid thylakoid membrane. The enzyme catalyses reduced [plastocyanin] + hnu + oxidized [2Fe-2S]-[ferredoxin] = oxidized [plastocyanin] + reduced [2Fe-2S]-[ferredoxin]. In terms of biological role, apoprotein for the two 4Fe-4S centers FA and FB of photosystem I (PSI); essential for photochemical activity. FB is the terminal electron acceptor of PSI, donating electrons to ferredoxin. The C-terminus interacts with PsaA/B/D and helps assemble the protein into the PSI complex. Required for binding of PsaD and PsaE to PSI. PSI is a plastocyanin-ferredoxin oxidoreductase, converting photonic excitation into a charge separation, which transfers an electron from the donor P700 chlorophyll pair to the spectroscopically characterized acceptors A0, A1, FX, FA and FB in turn. This is Photosystem I iron-sulfur center from Cuscuta reflexa (Southern Asian dodder).